A 239-amino-acid polypeptide reads, in one-letter code: Uridylate kinase (239 aa).

13–16 (KVSG) is a binding site for ATP. Glycine 55 contributes to the UMP binding site. ATP-binding residues include glycine 56 and arginine 60. Residues aspartate 75 and 136–143 (TGNPFFTT) contribute to the UMP site. 4 residues coordinate ATP: threonine 163, glutamine 164, tyrosine 169, and aspartate 172.

This sequence belongs to the UMP kinase family. In terms of assembly, homohexamer.

Its subcellular location is the cytoplasm. The enzyme catalyses UMP + ATP = UDP + ADP. The protein operates within pyrimidine metabolism; CTP biosynthesis via de novo pathway; UDP from UMP (UMPK route): step 1/1. Its activity is regulated as follows. Inhibited by UTP. Its function is as follows. Catalyzes the reversible phosphorylation of UMP to UDP. The protein is Uridylate kinase of Bartonella henselae (strain ATCC 49882 / DSM 28221 / CCUG 30454 / Houston 1) (Rochalimaea henselae).